The chain runs to 816 residues: Phosphatidylinositol 4-kinase beta (816 aa).

Disordered stretches follow at residues 1 to 30 (MGDT…GSLL), 101 to 120 (EDEM…RRRR), and 248 to 318 (AHRK…SFSS). G2 bears the N-acetylglycine mark. The segment at 2 to 68 (GDTIVEPAPL…VKLLHGGVAI (67 aa)) is interaction with ACBD3. Positions 29–242 (LLSVITEGVG…GTKLRKLILS (214 aa)) constitute a PIK helical domain. A Phosphoserine modification is found at S258. T263 is subject to Phosphothreonine. S266, S275, S277, S284, and S294 each carry phosphoserine. Polar residues-rich tracts occupy residues 278–297 (DATA…SNPK) and 306–318 (SSST…SFSS). A Phosphoserine modification is found at S428. Residue T438 is modified to Phosphothreonine. Residue S511 is modified to Phosphoserine. Phosphothreonine is present on residues T517 and T519. Positions 535–801 (EPWQEKVRRI…MVDGSMRSIT (267 aa)) constitute a PI3K/PI4K catalytic domain. The interval 541–547 (VRRIREG) is G-loop. The tract at residues 668–676 (QVKDRHNGN) is catalytic loop. Residues 687 to 711 (HIDFGFILSSSPRNLGFETSAFKLT) are activation loop.

Belongs to the PI3/PI4-kinase family. Type III PI4K subfamily. Interacts with ARF1 and ARF3 in the Golgi complex, but not with ARF4, ARF5 or ARF6. Interacts with NCS1/FREQ in a calcium-independent manner. Interacts with CALN1/CABP8 and CALN2/CABP7; in a calcium-dependent manner; this interaction competes with NCS1/FREQ binding. Interacts with ACBD3. Interacts with ARMH3, YWHAB, YWHAE, YWHAG, YWHAH, YWHAQ, YWHAZ and SFN. Interacts with GGA2 (via VHS domain); the interaction is important for PI4KB location at the Golgi apparatus membrane. Interacts with ATG9A. Mg(2+) serves as cofactor. Requires Mn(2+) as cofactor.

The protein localises to the endomembrane system. It localises to the mitochondrion outer membrane. It is found in the rough endoplasmic reticulum membrane. Its subcellular location is the golgi apparatus. The protein resides in the golgi apparatus membrane. The catalysed reaction is a 1,2-diacyl-sn-glycero-3-phospho-(1D-myo-inositol) + ATP = a 1,2-diacyl-sn-glycero-3-phospho-(1D-myo-inositol 4-phosphate) + ADP + H(+). Inhibited by wortmannin. Increased kinase activity upon interaction with NCS1/FREQ. Phosphorylates phosphatidylinositol (PI) in the first committed step in the production of the second messenger inositol-1,4,5,-trisphosphate (PIP). May regulate Golgi disintegration/reorganization during mitosis, possibly via its phosphorylation. Involved in Golgi-to-plasma membrane trafficking. The chain is Phosphatidylinositol 4-kinase beta (PI4KB) from Bos taurus (Bovine).